A 201-amino-acid chain; its full sequence is Molybdenum cofactor guanylyltransferase (201 aa).

GTP is bound by residues 15–17 (LAG), Lys-28, Asp-74, and Asp-104. Asp-104 is a binding site for Mg(2+).

Belongs to the MobA family. Monomer. Mg(2+) is required as a cofactor.

It is found in the cytoplasm. The catalysed reaction is Mo-molybdopterin + GTP + H(+) = Mo-molybdopterin guanine dinucleotide + diphosphate. Its function is as follows. Transfers a GMP moiety from GTP to Mo-molybdopterin (Mo-MPT) cofactor (Moco or molybdenum cofactor) to form Mo-molybdopterin guanine dinucleotide (Mo-MGD) cofactor. The protein is Molybdenum cofactor guanylyltransferase of Pseudomonas syringae pv. tomato (strain ATCC BAA-871 / DC3000).